The chain runs to 98 residues: Large ribosomal subunit protein uL23 (98 aa).

This sequence belongs to the universal ribosomal protein uL23 family. Part of the 50S ribosomal subunit. Contacts protein L29, and trigger factor when it is bound to the ribosome.

One of the early assembly proteins it binds 23S rRNA. One of the proteins that surrounds the polypeptide exit tunnel on the outside of the ribosome. Forms the main docking site for trigger factor binding to the ribosome. This Sorangium cellulosum (strain So ce56) (Polyangium cellulosum (strain So ce56)) protein is Large ribosomal subunit protein uL23.